The chain runs to 2176 residues: Nipped-B-like protein scc-2 (2176 aa).

Over residues Met1–Ala25 the composition is skewed to polar residues. 7 disordered regions span residues Met1–Gly27, Pro150–Ser170, Ser464–Gly483, Met495–Lys514, Tyr523–Asp551, Gln585–Arg615, and Asp669–Glu708. The span at Ser464 to Thr473 shows a compositional bias: low complexity. Composition is skewed to basic and acidic residues over residues Glu597–Arg615 and Ser685–Glu695. The span at Asn696–Glu708 shows a compositional bias: acidic residues. HEAT repeat units lie at residues Asp1280–Ala1312, Glu1320–Tyr1351, Glu1353–Lys1388, Glu1393–Gln1426, Glu1692–Gln1723, Gln1803–Gln1834, and Gly1840–Lys1871. The disordered stretch occupies residues Ile2149–His2176. Residues Asp2154–Gly2163 show a composition bias toward acidic residues.

It belongs to the SCC2/Nipped-B family. In terms of assembly, may heterodimerize with mau-2/SCC4 to form the cohesin loading complex.

It is found in the nucleus. Its subcellular location is the chromosome. Its function is as follows. Plays an important role in the loading of the cohesin complex on to meiotic chromosomes. Forms a heterodimeric complex (also known as cohesin loading complex) with mau-2/SCC4 which mediates the loading of the cohesin complex onto chromatin. Plays an essential role in cell division during embryonic development. Promotes normal chromosome organization during meiosis. Required for the assembly of the synaptonemal complex between homologous chromosomes to promote sister chromatid cohesion during meiosis. Required for chromosome segregation during mitosis and meiosis. Plays a role in DNA double-strand break (DSB) repair during meiotic recombination and promotes the assembly of the 9-1-1 cell-cycle checkpoint response complex which is required for inducing apoptosis in response to DNA damage, at DNA damage sites. In Caenorhabditis elegans, this protein is Nipped-B-like protein scc-2.